Here is a 277-residue protein sequence, read N- to C-terminus: Urease accessory protein UreD (277 aa).

The protein belongs to the UreD family. In terms of assembly, ureD, UreF and UreG form a complex that acts as a GTP-hydrolysis-dependent molecular chaperone, activating the urease apoprotein by helping to assemble the nickel containing metallocenter of UreC. The UreE protein probably delivers the nickel.

It localises to the cytoplasm. Functionally, required for maturation of urease via the functional incorporation of the urease nickel metallocenter. In Flavobacterium johnsoniae (strain ATCC 17061 / DSM 2064 / JCM 8514 / BCRC 14874 / CCUG 350202 / NBRC 14942 / NCIMB 11054 / UW101) (Cytophaga johnsonae), this protein is Urease accessory protein UreD.